Consider the following 488-residue polypeptide: MEKWWFNSMLSNEELEHRCGLSKSMDSLGCPIGNTSGSEDPIINDTDKNIHSWNDSGSYSCSNVDHFLGVRDIWSFISDETFLVRDSNGNSYSVYFDIENHIFEIDNDSSFLSELESSFSSYLNNGSKSDNRYYDCDMYDTKYSWNNHINSCIDSYLRSEISIDSYISSGSDNCSDSYIYSYICSGESISGSDSGSSNIRTDGNGSDIRGRSNDFDINQKYRHLWVQCENCYGLNYKKFFKSKMNICEQCGYHLKMSSSDRIELSIDPGTWDPMDEDMVSIDPIEFHSEEEPYRDRIDSYQRKTGLTEAVQTGIGQLNGIPIAIGVMDFEFMGGSMGSVVGEKITRLIEYATNRSLPVIMVCASGGARMQEGSLSLMQMAKISSALYDYQSNKKLFYVSILTSPTTGGVTASFGMLGDIIIAEPNAYIAFAGKRVIEQTLNKTVPDGSQAAEYSFHKGLFDPIVPRNLLKGVLSELFQLHGFFPLTQN.

The interval 189 to 211 (ISGSDSGSSNIRTDGNGSDIRGR) is disordered. One can recognise a CoA carboxyltransferase N-terminal domain in the interval 224–488 (LWVQCENCYG…LHGFFPLTQN (265 aa)). Zn(2+)-binding residues include cysteine 228, cysteine 231, cysteine 247, and cysteine 250. Residues 228-250 (CENCYGLNYKKFFKSKMNICEQC) form a C4-type zinc finger.

It belongs to the AccD/PCCB family. In terms of assembly, acetyl-CoA carboxylase is a heterohexamer composed of biotin carboxyl carrier protein, biotin carboxylase and 2 subunits each of ACCase subunit alpha and ACCase plastid-coded subunit beta (accD). Zn(2+) serves as cofactor.

It is found in the plastid. It localises to the chloroplast stroma. It catalyses the reaction N(6)-carboxybiotinyl-L-lysyl-[protein] + acetyl-CoA = N(6)-biotinyl-L-lysyl-[protein] + malonyl-CoA. Its pathway is lipid metabolism; malonyl-CoA biosynthesis; malonyl-CoA from acetyl-CoA: step 1/1. Component of the acetyl coenzyme A carboxylase (ACC) complex. Biotin carboxylase (BC) catalyzes the carboxylation of biotin on its carrier protein (BCCP) and then the CO(2) group is transferred by the transcarboxylase to acetyl-CoA to form malonyl-CoA. The sequence is that of Acetyl-coenzyme A carboxylase carboxyl transferase subunit beta, chloroplastic from Liriodendron tulipifera (Tuliptree).